Consider the following 246-residue polypeptide: Uridylate kinase (246 aa).

18 to 21 contacts ATP; that stretch reads KVSG. UMP is bound at residue Gly-60. Residues Gly-61 and Arg-65 each coordinate ATP. UMP is bound by residues Asp-80 and 141–148; that span reads TGNPFFTT. ATP contacts are provided by Thr-168, Gln-169, Tyr-174, and Asp-177.

The protein belongs to the UMP kinase family. As to quaternary structure, homohexamer.

The protein resides in the cytoplasm. The catalysed reaction is UMP + ATP = UDP + ADP. Its pathway is pyrimidine metabolism; CTP biosynthesis via de novo pathway; UDP from UMP (UMPK route): step 1/1. Inhibited by UTP. In terms of biological role, catalyzes the reversible phosphorylation of UMP to UDP. In Gluconobacter oxydans (strain 621H) (Gluconobacter suboxydans), this protein is Uridylate kinase.